A 190-amino-acid polypeptide reads, in one-letter code: Threonylcarbamoyl-AMP synthase (190 aa).

Residues 7 to 190 (RDAIAAAIDV…ALTGELFRQG (184 aa)) form the YrdC-like domain.

This sequence belongs to the SUA5 family. TsaC subfamily.

The protein localises to the cytoplasm. The catalysed reaction is L-threonine + hydrogencarbonate + ATP = L-threonylcarbamoyladenylate + diphosphate + H2O. Its function is as follows. Required for the formation of a threonylcarbamoyl group on adenosine at position 37 (t(6)A37) in tRNAs that read codons beginning with adenine. Catalyzes the conversion of L-threonine, HCO(3)(-)/CO(2) and ATP to give threonylcarbamoyl-AMP (TC-AMP) as the acyladenylate intermediate, with the release of diphosphate. The chain is Threonylcarbamoyl-AMP synthase from Escherichia coli O9:H4 (strain HS).